The primary structure comprises 242 residues: UPF0273 protein TM_0370 (242 aa).

A KaiC domain is found at 3–242; it reads KRVKTGIPGM…IYPSEGGEGR (240 aa). 30-37 contacts ATP; the sequence is GGPGTGKT.

This sequence belongs to the UPF0273 family.

This is UPF0273 protein TM_0370 from Thermotoga maritima (strain ATCC 43589 / DSM 3109 / JCM 10099 / NBRC 100826 / MSB8).